The chain runs to 112 residues: Nucleoid-associated protein lpg2755 (112 aa).

Belongs to the YbaB/EbfC family. In terms of assembly, homodimer.

It is found in the cytoplasm. The protein localises to the nucleoid. Binds to DNA and alters its conformation. May be involved in regulation of gene expression, nucleoid organization and DNA protection. The protein is Nucleoid-associated protein lpg2755 of Legionella pneumophila subsp. pneumophila (strain Philadelphia 1 / ATCC 33152 / DSM 7513).